Here is a 308-residue protein sequence, read N- to C-terminus: N-acetylmuramic acid 6-phosphate etherase (308 aa).

The 164-residue stretch at T62 to K225 folds into the SIS domain. E90 serves as the catalytic Proton donor. The active site involves E121.

Belongs to the GCKR-like family. MurNAc-6-P etherase subfamily. In terms of assembly, homodimer.

The enzyme catalyses N-acetyl-D-muramate 6-phosphate + H2O = N-acetyl-D-glucosamine 6-phosphate + (R)-lactate. It functions in the pathway amino-sugar metabolism; N-acetylmuramate degradation. In terms of biological role, specifically catalyzes the cleavage of the D-lactyl ether substituent of MurNAc 6-phosphate, producing GlcNAc 6-phosphate and D-lactate. The sequence is that of N-acetylmuramic acid 6-phosphate etherase from Thermosynechococcus vestitus (strain NIES-2133 / IAM M-273 / BP-1).